The chain runs to 325 residues: Putative metal ion transporter ZIPCO (325 aa).

The next 3 helical transmembrane spans lie at 5-25 (TFLA…PAYI), 46-66 (IASG…VIIL), and 74-94 (LYYI…TDIL). Residues asparagine 106 and asparagine 160 are each glycosylated (N-linked (GlcNAc...) asparagine). A run of 4 helical transmembrane segments spans residues 179–199 (FFIV…MGSL), 239–259 (IYAW…IFSF), 264–284 (FVEI…SFNM), and 296–316 (HFIS…MILF).

Its subcellular location is the cytoplasmic vesicle membrane. Functionally, putative transporter for the divalent zinc and iron cations. The polypeptide is Putative metal ion transporter ZIPCO (Plasmodium falciparum (isolate 3D7)).